We begin with the raw amino-acid sequence, 151 residues long: Lipoprotein signal peptidase (151 aa).

The next 3 membrane-spanning stretches (helical) occupy residues 3 to 23, 59 to 79, and 85 to 107; these read LYIILGLLILVGDQLLKGWIV, WFFYIVTIIAVGVIGYLFYTS, and LYRIGLTLMLAGALGNFIDRLHL. Residues D112 and D128 contribute to the active site. Residues 123–143 traverse the membrane as a helical segment; the sequence is IFNVADTALTCGVICVFIAIL.

Belongs to the peptidase A8 family.

The protein resides in the cell membrane. It carries out the reaction Release of signal peptides from bacterial membrane prolipoproteins. Hydrolyzes -Xaa-Yaa-Zaa-|-(S,diacylglyceryl)Cys-, in which Xaa is hydrophobic (preferably Leu), and Yaa (Ala or Ser) and Zaa (Gly or Ala) have small, neutral side chains.. It participates in protein modification; lipoprotein biosynthesis (signal peptide cleavage). In terms of biological role, this protein specifically catalyzes the removal of signal peptides from prolipoproteins. The chain is Lipoprotein signal peptidase from Latilactobacillus sakei subsp. sakei (strain 23K) (Lactobacillus sakei subsp. sakei).